The primary structure comprises 490 residues: GTPase Der (490 aa).

EngA-type G domains lie at 1–165 (MRIA…QIPV) and 227–400 (LKVA…TIAT). GTP contacts are provided by residues 7–14 (GRPNVGKS), 54–58 (DTGGV), 117–120 (NKAD), 233–240 (GHPNVGKS), 280–284 (DTAGL), and 345–348 (NKWD). One can recognise a KH-like domain in the interval 401 to 485 (TKLSTSLVNK…PFDLEYKAKP (85 aa)).

The protein belongs to the TRAFAC class TrmE-Era-EngA-EngB-Septin-like GTPase superfamily. EngA (Der) GTPase family. Associates with the 50S ribosomal subunit.

GTPase that plays an essential role in the late steps of ribosome biogenesis. This is GTPase Der from Chlamydia trachomatis serovar A (strain ATCC VR-571B / DSM 19440 / HAR-13).